A 163-amino-acid chain; its full sequence is Phosphopantetheine adenylyltransferase (163 aa).

Ser-8 provides a ligand contact to substrate. Residues 8 to 9 and His-16 contribute to the ATP site; that span reads SF. Substrate is bound by residues Lys-40, Thr-72, and Arg-86. ATP-binding positions include 87–89, Glu-97, and 122–128; these read GLR and HSFLSSS.

This sequence belongs to the bacterial CoaD family. As to quaternary structure, homohexamer. The cofactor is Mg(2+).

Its subcellular location is the cytoplasm. It catalyses the reaction (R)-4'-phosphopantetheine + ATP + H(+) = 3'-dephospho-CoA + diphosphate. It functions in the pathway cofactor biosynthesis; coenzyme A biosynthesis; CoA from (R)-pantothenate: step 4/5. Its function is as follows. Reversibly transfers an adenylyl group from ATP to 4'-phosphopantetheine, yielding dephospho-CoA (dPCoA) and pyrophosphate. The sequence is that of Phosphopantetheine adenylyltransferase from Parasynechococcus marenigrum (strain WH8102).